A 231-amino-acid chain; its full sequence is Small ribosomal subunit protein uS3 (231 aa).

A KH type-2 domain is found at 17–86; the sequence is VEKYLTKELK…SPQIEVQQVQ (70 aa).

It belongs to the universal ribosomal protein uS3 family. In terms of assembly, part of the 30S ribosomal subunit.

Its function is as follows. Binds the lower part of the 30S subunit head. This chain is Small ribosomal subunit protein uS3, found in Methanoregula boonei (strain DSM 21154 / JCM 14090 / 6A8).